Reading from the N-terminus, the 100-residue chain is Urease subunit gamma (100 aa).

This sequence belongs to the urease gamma subunit family. Heterotrimer of UreA (gamma), UreB (beta) and UreC (alpha) subunits. Three heterotrimers associate to form the active enzyme.

Its subcellular location is the cytoplasm. The catalysed reaction is urea + 2 H2O + H(+) = hydrogencarbonate + 2 NH4(+). The protein operates within nitrogen metabolism; urea degradation; CO(2) and NH(3) from urea (urease route): step 1/1. In Bradyrhizobium diazoefficiens (strain JCM 10833 / BCRC 13528 / IAM 13628 / NBRC 14792 / USDA 110), this protein is Urease subunit gamma.